The following is a 126-amino-acid chain: Histone H2B type 1-K (126 aa).

Residues 1-12 (MPEPAKSAPAPK) are compositionally biased toward low complexity. The tract at residues 1–36 (MPEPAKSAPAPKKGSKKAVTKAQKKDGKKRKRSRKE) is disordered. Residue Pro2 is modified to N-acetylproline. Position 3 is an ADP-ribosyl glutamic acid (Glu3). An N6-(2-hydroxyisobutyryl)lysine; alternate modification is found at Lys6. Lys6 is modified (N6-(beta-hydroxybutyryl)lysine; alternate). Lys6 carries the N6-acetyllysine; alternate modification. Lys6 bears the N6-butyryllysine; alternate mark. Lys6 carries the N6-crotonyllysine; alternate modification. Residue Lys6 is modified to N6-lactoyllysine; alternate. Lys6 participates in a covalent cross-link: Glycyl lysine isopeptide (Lys-Gly) (interchain with G-Cter in SUMO2); alternate. At Ser7 the chain carries ADP-ribosylserine. Lys12 is modified (N6-(beta-hydroxybutyryl)lysine; alternate). N6-acetyllysine; alternate occurs at positions 12 and 13. An N6-crotonyllysine; alternate mark is found at Lys12 and Lys13. Lys12 carries the N6-lactoyllysine; alternate modification. Lys13 carries the N6-(2-hydroxyisobutyryl)lysine; alternate modification. Ser15 carries the phosphoserine; by STK4/MST1 modification. N6-acetyllysine; alternate occurs at positions 16, 17, 21, and 24. 4 positions are modified to N6-crotonyllysine; alternate: Lys16, Lys17, Lys21, and Lys24. 4 positions are modified to N6-lactoyllysine; alternate: Lys16, Lys17, Lys21, and Lys24. N6-(beta-hydroxybutyryl)lysine; alternate is present on residues Lys17 and Lys21. Residue Lys17 is modified to N6-glutaryllysine; alternate. An N6-(2-hydroxyisobutyryl)lysine; alternate mark is found at Lys21 and Lys24. N6-butyryllysine; alternate is present on Lys21. Residue Lys21 forms a Glycyl lysine isopeptide (Lys-Gly) (interchain with G-Cter in SUMO2); alternate linkage. Lys25 bears the N6-(2-hydroxyisobutyryl)lysine mark. N6-(2-hydroxyisobutyryl)lysine; alternate is present on Lys35. Residue Lys35 is modified to N6-(beta-hydroxybutyryl)lysine; alternate. An N6-crotonyllysine; alternate modification is found at Lys35. The residue at position 35 (Lys35) is an N6-glutaryllysine; alternate. Lys35 is modified (N6-succinyllysine; alternate). Residue Lys35 forms a Glycyl lysine isopeptide (Lys-Gly) (interchain with G-Cter in ubiquitin); alternate linkage. PolyADP-ribosyl glutamic acid is present on Glu36. The residue at position 37 (Ser37) is a Phosphoserine; by AMPK. Residues Lys44, Lys47, and Lys58 each carry the N6-(2-hydroxyisobutyryl)lysine; alternate modification. Residue Lys44 is modified to N6-lactoyllysine; alternate. An N6-glutaryllysine; alternate mark is found at Lys44 and Lys47. Lys47 is modified (N6-methyllysine; alternate). Residue Lys58 is modified to N6,N6-dimethyllysine; alternate. Residue Arg80 is modified to Dimethylated arginine. Position 86 is an N6-(2-hydroxyisobutyryl)lysine; alternate (Lys86). At Lys86 the chain carries N6-(beta-hydroxybutyryl)lysine; alternate. Position 86 is an N6-acetyllysine; alternate (Lys86). Lys86 carries the post-translational modification N6-lactoyllysine; alternate. N6,N6,N6-trimethyllysine; alternate is present on Lys86. Arg87 and Arg93 each carry omega-N-methylarginine. Lys109 carries the post-translational modification N6-(2-hydroxyisobutyryl)lysine; alternate. Residue Lys109 is modified to N6-lactoyllysine; alternate. Lys109 carries the post-translational modification N6-glutaryllysine; alternate. Lys109 carries the N6-methyllysine; alternate modification. Ser113 is a glycosylation site (O-linked (GlcNAc) serine). Phosphothreonine is present on Thr116. Lys117 and Lys121 each carry N6-(2-hydroxyisobutyryl)lysine; alternate. Lys117 and Lys121 each carry N6-(beta-hydroxybutyryl)lysine; alternate. Lys117 and Lys121 each carry N6-lactoyllysine; alternate. N6-glutaryllysine; alternate is present on residues Lys117 and Lys121. N6-succinyllysine; alternate occurs at positions 117 and 121. The residue at position 117 (Lys117) is an N6-malonyllysine; alternate. Lys117 bears the N6-methylated lysine; alternate mark. Lys121 participates in a covalent cross-link: Glycyl lysine isopeptide (Lys-Gly) (interchain with G-Cter in ubiquitin); alternate.

Belongs to the histone H2B family. As to quaternary structure, the nucleosome is a histone octamer containing two molecules each of H2A, H2B, H3 and H4 assembled in one H3-H4 heterotetramer and two H2A-H2B heterodimers. The octamer wraps approximately 147 bp of DNA. In terms of processing, monoubiquitination at Lys-35 (H2BK34Ub) by the MSL1/MSL2 dimer is required for histone H3 'Lys-4' (H3K4me) and 'Lys-79' (H3K79me) methylation and transcription activation at specific gene loci, such as HOXA9 and MEIS1 loci. Similarly, monoubiquitination at Lys-121 (H2BK120Ub) by the RNF20/40 complex gives a specific tag for epigenetic transcriptional activation and is also prerequisite for histone H3 'Lys-4' and 'Lys-79' methylation. It also functions cooperatively with the FACT dimer to stimulate elongation by RNA polymerase II. H2BK120Ub also acts as a regulator of mRNA splicing: deubiquitination by USP49 is required for efficient cotranscriptional splicing of a large set of exons. Post-translationally, phosphorylation at Ser-37 (H2BS36ph) by AMPK in response to stress promotes transcription. Phosphorylated on Ser-15 (H2BS14ph) by STK4/MST1 during apoptosis; which facilitates apoptotic chromatin condensation. Also phosphorylated on Ser-15 in response to DNA double strand breaks (DSBs), and in correlation with somatic hypermutation and immunoglobulin class-switch recombination. GlcNAcylation at Ser-113 promotes monoubiquitination of Lys-121. It fluctuates in response to extracellular glucose, and associates with transcribed genes. In terms of processing, ADP-ribosylated by PARP1 or PARP2 on Ser-7 (H2BS6ADPr) in response to DNA damage. H2BS6ADPr promotes recruitment of CHD1L. Mono-ADP-ribosylated on Glu-3 (H2BE2ADPr) by PARP3 in response to single-strand breaks. Poly ADP-ribosylation on Glu-36 (H2BE35ADPr) by PARP1 regulates adipogenesis: it inhibits phosphorylation at Ser-37 (H2BS36ph), thereby blocking expression of pro-adipogenetic genes. Post-translationally, crotonylation (Kcr) is specifically present in male germ cells and marks testis-specific genes in post-meiotic cells, including X-linked genes that escape sex chromosome inactivation in haploid cells. Crotonylation marks active promoters and enhancers and confers resistance to transcriptional repressors. It is also associated with post-meiotically activated genes on autosomes. Lactylated in macrophages by EP300/P300 by using lactoyl-CoA directly derived from endogenous or exogenous lactate, leading to stimulates gene transcription.

Its subcellular location is the nucleus. It is found in the chromosome. In terms of biological role, core component of nucleosome. Nucleosomes wrap and compact DNA into chromatin, limiting DNA accessibility to the cellular machineries which require DNA as a template. Histones thereby play a central role in transcription regulation, DNA repair, DNA replication and chromosomal stability. DNA accessibility is regulated via a complex set of post-translational modifications of histones, also called histone code, and nucleosome remodeling. Has broad antibacterial activity. May contribute to the formation of the functional antimicrobial barrier of the colonic epithelium, and to the bactericidal activity of amniotic fluid. This Homo sapiens (Human) protein is Histone H2B type 1-K.